The following is a 353-amino-acid chain: GTPase Obg (353 aa).

An Obg domain is found at 1 to 159 (MKFLDEAKVY…RWIWLRLKLI (159 aa)). An OBG-type G domain is found at 160-327 (ADAGLVGLPN…ALRALAAVIG (168 aa)). GTP-binding positions include 166–173 (GLPNAGKS), 191–195 (FTTLH), 212–215 (DIPG), 279–282 (NKID), and 308–310 (SGV). Mg(2+)-binding residues include serine 173 and threonine 193.

It belongs to the TRAFAC class OBG-HflX-like GTPase superfamily. OBG GTPase family. Monomer. Mg(2+) is required as a cofactor.

It is found in the cytoplasm. Functionally, an essential GTPase which binds GTP, GDP and possibly (p)ppGpp with moderate affinity, with high nucleotide exchange rates and a fairly low GTP hydrolysis rate. Plays a role in control of the cell cycle, stress response, ribosome biogenesis and in those bacteria that undergo differentiation, in morphogenesis control. In Rhodopseudomonas palustris (strain BisB5), this protein is GTPase Obg.